A 408-amino-acid chain; its full sequence is tRNA pseudouridine synthase D (408 aa).

Residue Asp82 is the Nucleophile of the active site. The TRUD domain occupies 157-367 (GVPNRFGEQR…MEGERRPLRV (211 aa)).

It belongs to the pseudouridine synthase TruD family.

The catalysed reaction is uridine(13) in tRNA = pseudouridine(13) in tRNA. Its function is as follows. Responsible for synthesis of pseudouridine from uracil-13 in transfer RNAs. In Geobacter sulfurreducens (strain ATCC 51573 / DSM 12127 / PCA), this protein is tRNA pseudouridine synthase D.